The primary structure comprises 154 residues: Prefoldin subunit 2 (154 aa).

Disordered regions lie at residues 1 to 20 and 126 to 154; these read MADSSGRVGKSGGSGTGKGA and LMGEDEKPAAKENSEGAGAKSSSAGVLVS. Residues 9-18 show a composition bias toward gly residues; it reads GKSGGSGTGK. Basic and acidic residues predominate over residues 126–139; sequence LMGEDEKPAAKENS. Over residues 141–154 the composition is skewed to low complexity; sequence GAGAKSSSAGVLVS.

This sequence belongs to the prefoldin subunit beta family. In terms of assembly, heterohexamer of two PFD-alpha type and four PFD-beta type subunits. Component of the PAQosome complex which is responsible for the biogenesis of several protein complexes and which consists of R2TP complex members RUVBL1, RUVBL2, RPAP3 and PIH1D1, URI complex members PFDN2, PFDN6, PDRG1, UXT and URI1 as well as ASDURF, POLR2E and DNAAF10/WDR92. Interacts with URI1; the interaction is phosphorylation-dependent and occurs in a growth-dependent manner.

The protein resides in the nucleus. The protein localises to the cytoplasm. Its subcellular location is the mitochondrion. In terms of biological role, binds specifically to cytosolic chaperonin (c-CPN) and transfers target proteins to it. Binds to nascent polypeptide chain and promotes folding in an environment in which there are many competing pathways for nonnative proteins. In Rattus norvegicus (Rat), this protein is Prefoldin subunit 2 (Pfdn2).